A 359-amino-acid polypeptide reads, in one-letter code: Tyrosine-protein phosphatase non-receptor type 7 (359 aa).

Residues 1 to 33 are disordered; it reads MVQACEGRSRAQLPTLSLGADMTQPPPTKAPAK. Residues 38 to 51 are interaction with MAP kinases; sequence LQERRGSSVALMLD. Ser44 is subject to Phosphoserine. Thr66 carries the post-translational modification Phosphothreonine. Phosphoserine is present on residues Ser93 and Ser143. Positions 97 to 349 constitute a Tyrosine-protein phosphatase domain; the sequence is LEEEFLKIPS…QFLHHTLALY (253 aa). Substrate is bound by residues Asp257, 290–296, and Gln334; that span reads CSAGIGR. The Phosphocysteine intermediate role is filled by Cys290. A Cysteine sulfenic acid (-SOH) modification is found at Cys290.

It belongs to the protein-tyrosine phosphatase family. Non-receptor class subfamily. Post-translationally, oxidized at active site cysteine. Treatment with pervanadate (vanadate and H(2)O(2)) or with antigen enhanced oxidation of active site cysteine. Expressed in bone marrow-derived mast cells.

It localises to the cytoplasm. The protein localises to the cytoskeleton. It carries out the reaction O-phospho-L-tyrosyl-[protein] + H2O = L-tyrosyl-[protein] + phosphate. Its activity is regulated as follows. Inhibited upon FCER1A triggering. In terms of biological role, may play a role in the regulation of T and B-lymphocyte development and signal transduction. This Mus musculus (Mouse) protein is Tyrosine-protein phosphatase non-receptor type 7 (Ptpn7).